The chain runs to 269 residues: Formamidopyrimidine-DNA glycosylase (269 aa).

Pro-2 functions as the Schiff-base intermediate with DNA in the catalytic mechanism. The Proton donor role is filled by Glu-3. The active-site Proton donor; for beta-elimination activity is Lys-57. Positions 90, 109, and 150 each coordinate DNA. The segment at 235 to 269 (QVYGRKGEPCRICGMPVVGTKHAQRATFYCRQCQK) adopts an FPG-type zinc-finger fold. Arg-259 (proton donor; for delta-elimination activity) is an active-site residue.

The protein belongs to the FPG family. Monomer. Zn(2+) serves as cofactor.

It carries out the reaction Hydrolysis of DNA containing ring-opened 7-methylguanine residues, releasing 2,6-diamino-4-hydroxy-5-(N-methyl)formamidopyrimidine.. The enzyme catalyses 2'-deoxyribonucleotide-(2'-deoxyribose 5'-phosphate)-2'-deoxyribonucleotide-DNA = a 3'-end 2'-deoxyribonucleotide-(2,3-dehydro-2,3-deoxyribose 5'-phosphate)-DNA + a 5'-end 5'-phospho-2'-deoxyribonucleoside-DNA + H(+). In terms of biological role, involved in base excision repair of DNA damaged by oxidation or by mutagenic agents. Acts as a DNA glycosylase that recognizes and removes damaged bases. Has a preference for oxidized purines, such as 7,8-dihydro-8-oxoguanine (8-oxoG). Has AP (apurinic/apyrimidinic) lyase activity and introduces nicks in the DNA strand. Cleaves the DNA backbone by beta-delta elimination to generate a single-strand break at the site of the removed base with both 3'- and 5'-phosphates. The polypeptide is Formamidopyrimidine-DNA glycosylase (Klebsiella pneumoniae subsp. pneumoniae (strain ATCC 700721 / MGH 78578)).